The following is a 546-amino-acid chain: (-)-5-epieremophilene synthase STPS2 (546 aa).

5 residues coordinate Mg(2+): Asp-299, Asp-303, Asp-442, Thr-446, and Glu-450. A DDXXD motif motif is present at residues 299-303 (DDTYD).

It belongs to the terpene synthase family. Tpsa subfamily. In terms of assembly, monomer. The cofactor is Mg(2+). In terms of tissue distribution, highly expressed in leaves. Expressed at levels in flowers.

The catalysed reaction is (2E,6E)-farnesyl diphosphate = (-)-5-epi-eremophilene + diphosphate. It functions in the pathway secondary metabolite biosynthesis; terpenoid biosynthesis. In terms of biological role, sesquiterpene synthase that catalyzes the conversion of farnesyl diphosphate to (-)-5-epi-eremophilene. The chain is (-)-5-epieremophilene synthase STPS2 from Salvia miltiorrhiza (Chinese sage).